Here is a 193-residue protein sequence, read N- to C-terminus: Annexin-2 receptor (193 aa).

A compositionally biased stretch (polar residues) spans 78-87; that stretch reads QSTLEPSTAK. Residues 78–111 form a disordered region; the sequence is QSTLEPSTAKPTEFSWPGTQKQQEAPVEEVGQAE.

As to expression, widely expressed. Highly expressed in lymphocytes. Expressed in both resting CD4(+) and CD8(+) T-cells.

In terms of biological role, may act as a receptor for annexin II on marrow stromal cells to induce osteoclast formation. This chain is Annexin-2 receptor (ANXA2R), found in Homo sapiens (Human).